A 244-amino-acid polypeptide reads, in one-letter code: TETETTSFSIPKTDQPSSPKFVSGQPNLIFQGNAYSTDGKLILTEAKQNTVGRALYSAPIHIWDRKTGKVADFTASFTFYIRPNSDSQVVADGFTFFIAPVDTQPRGDGGLLGVFNREEYDPTIHTVAVEFDTFHNQPWDPDYIHIGVDINSIKSRITRPWNPHYDTYSIAYIAYKAATNELDVTVTYPNSRDYATLREVVDLKQIVPEWVRVGLSASTATYYSAHEVYSWSFHSELGGTSSSN.

A disordered region spans residues 1–20; that stretch reads TETETTSFSIPKTDQPSSPK.

This sequence belongs to the leguminous lectin family. Homodimer. In contrast to other Lathyrus lectins which are tetramer of two alpha and two beta chains.

The polypeptide is Lectin (Lathyrus sphaericus (Spring vetchling)).